The chain runs to 207 residues: Cytochrome c biogenesis ATP-binding export protein CcmA (207 aa).

The 204-residue stretch at 3–206 folds into the ABC transporter domain; that stretch reads LMAEGLSARR…AKSLEMTGFV (204 aa). Position 35–42 (35–42) interacts with ATP; it reads GPNGAGKS.

It belongs to the ABC transporter superfamily. CcmA exporter (TC 3.A.1.107) family. In terms of assembly, the complex is composed of two ATP-binding proteins (CcmA) and two transmembrane proteins (CcmB).

It localises to the cell inner membrane. It catalyses the reaction heme b(in) + ATP + H2O = heme b(out) + ADP + phosphate + H(+). Part of the ABC transporter complex CcmAB involved in the biogenesis of c-type cytochromes; once thought to export heme, this seems not to be the case, but its exact role is uncertain. Responsible for energy coupling to the transport system. The polypeptide is Cytochrome c biogenesis ATP-binding export protein CcmA (Rhizobium meliloti (strain 1021) (Ensifer meliloti)).